The primary structure comprises 469 residues: Cytochrome c biogenesis protein CcsB (469 aa).

Transmembrane regions (helical) follow at residues 30-50, 89-109, and 175-195; these read LRLA…GTVI, TPWF…CSLT, and IGPI…IWGS.

Belongs to the Ccs1/CcsB family. As to quaternary structure, may interact with CcsA.

Its subcellular location is the cellular thylakoid membrane. Required during biogenesis of c-type cytochromes (cytochrome c6 and cytochrome f) at the step of heme attachment. In Synechococcus sp. (strain JA-2-3B'a(2-13)) (Cyanobacteria bacterium Yellowstone B-Prime), this protein is Cytochrome c biogenesis protein CcsB.